A 180-amino-acid chain; its full sequence is Crossover junction endodeoxyribonuclease RuvC (180 aa).

Active-site residues include aspartate 7, glutamate 66, and aspartate 138. The Mg(2+) site is built by aspartate 7, glutamate 66, and aspartate 138.

Belongs to the RuvC family. As to quaternary structure, homodimer which binds Holliday junction (HJ) DNA. The HJ becomes 2-fold symmetrical on binding to RuvC with unstacked arms; it has a different conformation from HJ DNA in complex with RuvA. In the full resolvosome a probable DNA-RuvA(4)-RuvB(12)-RuvC(2) complex forms which resolves the HJ. It depends on Mg(2+) as a cofactor.

It localises to the cytoplasm. The enzyme catalyses Endonucleolytic cleavage at a junction such as a reciprocal single-stranded crossover between two homologous DNA duplexes (Holliday junction).. Functionally, the RuvA-RuvB-RuvC complex processes Holliday junction (HJ) DNA during genetic recombination and DNA repair. Endonuclease that resolves HJ intermediates. Cleaves cruciform DNA by making single-stranded nicks across the HJ at symmetrical positions within the homologous arms, yielding a 5'-phosphate and a 3'-hydroxyl group; requires a central core of homology in the junction. The consensus cleavage sequence is 5'-(A/T)TT(C/G)-3'. Cleavage occurs on the 3'-side of the TT dinucleotide at the point of strand exchange. HJ branch migration catalyzed by RuvA-RuvB allows RuvC to scan DNA until it finds its consensus sequence, where it cleaves and resolves the cruciform DNA. The protein is Crossover junction endodeoxyribonuclease RuvC of Burkholderia pseudomallei (strain 668).